Consider the following 122-residue polypeptide: Large ribosomal subunit protein uL18 (122 aa).

It belongs to the universal ribosomal protein uL18 family. Part of the 50S ribosomal subunit; part of the 5S rRNA/L5/L18/L25 subcomplex. Contacts the 5S and 23S rRNAs.

In terms of biological role, this is one of the proteins that bind and probably mediate the attachment of the 5S RNA into the large ribosomal subunit, where it forms part of the central protuberance. The chain is Large ribosomal subunit protein uL18 from Thermosipho melanesiensis (strain DSM 12029 / CIP 104789 / BI429).